A 406-amino-acid polypeptide reads, in one-letter code: Argininosuccinate synthase (406 aa).

ATP is bound at residue 8–16 (AYSGGLDTS). Tyrosine 86 lines the L-citrulline pocket. Position 116 (glycine 116) interacts with ATP. Positions 118, 122, and 123 each coordinate L-aspartate. Asparagine 122 is a binding site for L-citrulline. 4 residues coordinate L-citrulline: arginine 126, serine 174, glutamate 259, and tyrosine 271.

It belongs to the argininosuccinate synthase family. Type 1 subfamily. In terms of assembly, homotetramer.

It localises to the cytoplasm. The catalysed reaction is L-citrulline + L-aspartate + ATP = 2-(N(omega)-L-arginino)succinate + AMP + diphosphate + H(+). The protein operates within amino-acid biosynthesis; L-arginine biosynthesis; L-arginine from L-ornithine and carbamoyl phosphate: step 2/3. In Lacticaseibacillus paracasei (strain ATCC 334 / BCRC 17002 / CCUG 31169 / CIP 107868 / KCTC 3260 / NRRL B-441) (Lactobacillus paracasei), this protein is Argininosuccinate synthase.